A 295-amino-acid polypeptide reads, in one-letter code: MALLVRVLRNQTSISQWVPVCSQLVSVSPTQRQWSSTSQWLQKNQSRVCLGSEQTVGADTAQNRKYHNTSKLLTTQDFPQPVEEKVGPFTKIIEAMGFTGPLKYSKWKIKIAALRMYTSCVEKTDFEEFFLRCQMPDTFNSWFLITLLHVWMCLVRMKQEGRTGKYMCRIIVHFMWEDVEQRGRVMGVNSYILKKNMALMTNNFYAAILGYDEGILSDDHGLAAALWRTFFNQKCEDPRQLELLVEYVRKQMQYLDSMNGEDLLLTGEVRWRPLVEKNPQSILKPHAPTYNDEGL.

The protein belongs to the CBP3 family. In terms of assembly, interacts with UQCC2. Interacts with UQCC3. Forms a complex, named COMB/coordinator of mitochondrial CYTB biogenesis, composed of UQCC1, UQCC2, UQCC4, UQCC5 and UQCC6; stabilizes nascent cytochrome b/MT-CYB and promotes its membrane insertion. Forms a complex, named COMA, composed of UQCC1, UQCC2 and UQCC4; activates MT-CYB translation. Forms a complex, named COMC, composed of UQCC1, UQCC2; UQCC3 and UQCC4; mediates MT-CYB hemylation and association with the first nuclear-encoded CIII subunit UQCRQ. As to expression, in the brain it is restricted to the olfactory bulb, the hippocampus, the piriform cortex and the Purkinje cells.

It is found in the mitochondrion inner membrane. The protein resides in the cytoplasmic vesicle. Required for the assembly of the ubiquinol-cytochrome c reductase complex (mitochondrial respiratory chain complex III or cytochrome b-c1 complex). Involved in cytochrome b translation and/or stability. This chain is Ubiquinol-cytochrome c reductase complex assembly factor 1 (Uqcc1), found in Mus musculus (Mouse).